We begin with the raw amino-acid sequence, 248 residues long: 3-deoxy-manno-octulosonate cytidylyltransferase (248 aa).

The protein belongs to the KdsB family.

The protein localises to the cytoplasm. It carries out the reaction 3-deoxy-alpha-D-manno-oct-2-ulosonate + CTP = CMP-3-deoxy-beta-D-manno-octulosonate + diphosphate. It participates in nucleotide-sugar biosynthesis; CMP-3-deoxy-D-manno-octulosonate biosynthesis; CMP-3-deoxy-D-manno-octulosonate from 3-deoxy-D-manno-octulosonate and CTP: step 1/1. Its pathway is bacterial outer membrane biogenesis; lipopolysaccharide biosynthesis. Functionally, activates KDO (a required 8-carbon sugar) for incorporation into bacterial lipopolysaccharide in Gram-negative bacteria. This Erwinia tasmaniensis (strain DSM 17950 / CFBP 7177 / CIP 109463 / NCPPB 4357 / Et1/99) protein is 3-deoxy-manno-octulosonate cytidylyltransferase.